Consider the following 428-residue polypeptide: Enolase (428 aa).

Q163 provides a ligand contact to (2R)-2-phosphoglycerate. The Proton donor role is filled by E205. 3 residues coordinate Mg(2+): D243, E286, and D313. Positions 338, 367, 368, and 389 each coordinate (2R)-2-phosphoglycerate. The active-site Proton acceptor is the K338.

It belongs to the enolase family. It depends on Mg(2+) as a cofactor.

Its subcellular location is the cytoplasm. It localises to the secreted. It is found in the cell surface. The enzyme catalyses (2R)-2-phosphoglycerate = phosphoenolpyruvate + H2O. The protein operates within carbohydrate degradation; glycolysis; pyruvate from D-glyceraldehyde 3-phosphate: step 4/5. Its function is as follows. Catalyzes the reversible conversion of 2-phosphoglycerate (2-PG) into phosphoenolpyruvate (PEP). It is essential for the degradation of carbohydrates via glycolysis. The chain is Enolase from Polaromonas naphthalenivorans (strain CJ2).